The chain runs to 102 residues: Protein translation factor SUI1 homolog (102 aa).

The protein belongs to the SUI1 family.

This Nitrosopumilus maritimus (strain SCM1) protein is Protein translation factor SUI1 homolog.